Reading from the N-terminus, the 91-residue chain is UPF0250 protein HCH_05838 (91 aa).

It belongs to the UPF0250 family.

In Hahella chejuensis (strain KCTC 2396), this protein is UPF0250 protein HCH_05838.